A 922-amino-acid polypeptide reads, in one-letter code: Probable dipeptidyl-aminopeptidase B (922 aa).

Over residues 1–16 (MATEKGHSRDDEERVP) the composition is skewed to basic and acidic residues. Residues 1–21 (MATEKGHSRDDEERVPLTRGS) are disordered. The Cytoplasmic segment spans residues 1-99 (MATEKGHSRD…KPMHKSVKIA (99 aa)). The chain crosses the membrane as a helical; Signal-anchor for type II membrane protein span at residues 100 to 120 (LWSLLFLSLGGWSLAFVLFIF). The Vacuolar portion of the chain corresponds to 121–922 (RSHDTYQTPI…AGLYKFKHLC (802 aa)). N-linked (GlcNAc...) asparagine glycosylation is found at Asn135, Asn200, Asn351, and Asn574. The active-site Charge relay system is Ser756. N-linked (GlcNAc...) asparagine glycosylation occurs at Asn815. Active-site charge relay system residues include Asp833 and His866. Asn902 carries N-linked (GlcNAc...) asparagine glycosylation.

This sequence belongs to the peptidase S9B family.

Its subcellular location is the vacuole membrane. It catalyses the reaction Release of an N-terminal dipeptide, Xaa-Yaa-|-Zaa-, from a polypeptide, preferentially when Yaa is Pro, provided Zaa is neither Pro nor hydroxyproline.. Its function is as follows. Type IV dipeptidyl-peptidase which removes N-terminal dipeptides sequentially from polypeptides having unsubstituted N-termini provided that the penultimate residue is proline. The chain is Probable dipeptidyl-aminopeptidase B (DAPB) from Ajellomyces capsulatus (strain NAm1 / WU24) (Darling's disease fungus).